We begin with the raw amino-acid sequence, 298 residues long: Probable deoxyhypusine synthase 2 (298 aa).

The active-site Nucleophile is the Lys-259.

Belongs to the deoxyhypusine synthase family. It depends on NAD(+) as a cofactor.

It catalyses the reaction [eIF5A protein]-L-lysine + spermidine = [eIF5A protein]-deoxyhypusine + propane-1,3-diamine. It participates in protein modification; eIF5A hypusination. Functionally, catalyzes the NAD-dependent oxidative cleavage of spermidine and the subsequent transfer of the butylamine moiety of spermidine to the epsilon-amino group of a specific lysine residue of the eIF-5A precursor protein to form the intermediate deoxyhypusine residue. The protein is Probable deoxyhypusine synthase 2 (dys2) of Archaeoglobus fulgidus (strain ATCC 49558 / DSM 4304 / JCM 9628 / NBRC 100126 / VC-16).